Consider the following 243-residue polypeptide: Zinc import ATP-binding protein ZnuC (243 aa).

The 218-residue stretch at 25–242 folds into the ABC transporter domain; it reads LVVDSITLFY…AKFMSVFPEN (218 aa). ATP is bound at residue 57 to 64; the sequence is GPNGGGKT.

Belongs to the ABC transporter superfamily. Zinc importer (TC 3.A.1.15.5) family. The complex is composed of two ATP-binding proteins (ZnuC), two transmembrane proteins (ZnuB) and a solute-binding protein (ZnuA).

Its subcellular location is the cell inner membrane. The enzyme catalyses Zn(2+)(out) + ATP(in) + H2O(in) = Zn(2+)(in) + ADP(in) + phosphate(in) + H(+)(in). Its function is as follows. Part of the ABC transporter complex ZnuABC involved in zinc import. Responsible for energy coupling to the transport system. This is Zinc import ATP-binding protein ZnuC from Anaplasma phagocytophilum (strain HZ).